Reading from the N-terminus, the 1617-residue chain is Mitogen-activated protein kinase kinae kinase bck1 (1617 aa).

Disordered stretches follow at residues 1 to 73 (MDGQ…SQLQ), 167 to 199 (GPVH…RTMP), 211 to 253 (SVAS…GGMS), 345 to 399 (RQIH…SPNL), 455 to 555 (DHRR…SSSY), 568 to 633 (KRSK…LRGK), 739 to 820 (GVPL…ISPE), 832 to 1144 (EHKR…RGDI), and 1164 to 1277 (DIDL…EILR). Positions 19 to 28 (TQPSQSHMLS) are enriched in low complexity. Residues 44-60 (VMPPPPPGPPPGPPPGP) are compositionally biased toward pro residues. The span at 220–248 (TAQNHQSQTGQTNEPTKSPSHRQNNSNTL) shows a compositional bias: polar residues. The segment covering 482–504 (KSGSPATQHATLNQGLSSSSTGD) has biased composition (polar residues). The segment covering 524 to 533 (RYYESRKGQE) has biased composition (basic and acidic residues). 2 stretches are compositionally biased toward polar residues: residues 535 to 555 (IRPS…SSSY) and 586 to 596 (ESPTSPVNLRQ). Composition is skewed to basic and acidic residues over residues 832-841 (EHKREVERKQ) and 871-885 (FDER…KKAD). Composition is skewed to polar residues over residues 897-907 (PQESYTLTRIN) and 956-980 (GGKQ…PQSS). Basic and acidic residues-rich tracts occupy residues 1128–1140 (EDER…DSFA) and 1189–1198 (PENDLHKKEN). Composition is skewed to polar residues over residues 1199-1208 (QPSSSYTGEM) and 1257-1272 (NQAS…NQKS). The region spanning 1323–1596 (IIRGQLIGKG…QTLLTRHPFC (274 aa)) is the Protein kinase domain. ATP-binding positions include 1329-1337 (IGKGTYGRV) and lysine 1352. Aspartate 1453 (proton acceptor) is an active-site residue.

Belongs to the protein kinase superfamily. STE Ser/Thr protein kinase family. MAP kinase kinase subfamily.

It catalyses the reaction L-seryl-[protein] + ATP = O-phospho-L-seryl-[protein] + ADP + H(+). It carries out the reaction L-threonyl-[protein] + ATP = O-phospho-L-threonyl-[protein] + ADP + H(+). In terms of biological role, mitogen-activated kinase kinase kinase (MAPKKK), part of the cell wall integrity (CWI) signaling pathway composed by three protein kinases bck1, mkk2 and mpkA and responsible for the maintaining of cell-wall integrity balance. The CWI pathway also regulates the oxidative stress response, as well as the production of some secondary metabolites including pyomelanin. This Aspergillus fumigatus (strain CBS 144.89 / FGSC A1163 / CEA10) (Neosartorya fumigata) protein is Mitogen-activated protein kinase kinae kinase bck1.